The chain runs to 215 residues: Agamous-like MADS-box protein AGL63 (215 aa).

In terms of domain architecture, MADS-box spans 1–61 (MRKGKRVIKK…NRLYDFCSNS (61 aa)). Residues 90-178 (CSDCVKTKES…GSSWEQLMWQ (89 aa)) enclose the K-box domain. Disordered stretches follow at residues 143 to 172 (ARKS…GSSW) and 184 to 215 (MTCQ…SSPP).

In terms of assembly, forms homodimer. Interacts with AGL16. As to expression, expressed in bud pedicels, petals, anthers, style, ovary, seeds and embryos.

It is found in the nucleus. In terms of biological role, probable transcription factor involved in the regulation of fruit growth. Contributes to integument development. Controls organ size via cell expansion. Involved in the regulation of longitudinal growth of the fruit evenly throughout the radial axis. Functions redundantly with TT16/AGL32 to repress nucellus growth and promote its degeneration. In Arabidopsis thaliana (Mouse-ear cress), this protein is Agamous-like MADS-box protein AGL63.